The following is a 578-amino-acid chain: Glutamate--tRNA ligase (578 aa).

The 'HIGH' region signature appears at 97-107 (PNPDFVIHLGN).

This sequence belongs to the class-I aminoacyl-tRNA synthetase family. Glutamate--tRNA ligase type 2 subfamily.

It localises to the cytoplasm. The enzyme catalyses tRNA(Glu) + L-glutamate + ATP = L-glutamyl-tRNA(Glu) + AMP + diphosphate. Functionally, catalyzes the attachment of glutamate to tRNA(Glu) in a two-step reaction: glutamate is first activated by ATP to form Glu-AMP and then transferred to the acceptor end of tRNA(Glu). In Hyperthermus butylicus (strain DSM 5456 / JCM 9403 / PLM1-5), this protein is Glutamate--tRNA ligase.